Reading from the N-terminus, the 86-residue chain is Large ribosomal subunit protein bL27 (86 aa).

A compositionally biased stretch (gly residues) spans Met-1–Arg-11. Positions Met-1–Lys-24 are disordered.

This sequence belongs to the bacterial ribosomal protein bL27 family.

The chain is Large ribosomal subunit protein bL27 from Rickettsia africae (strain ESF-5).